The chain runs to 405 residues: Arginine biosynthesis bifunctional protein ArgJ (405 aa).

Positions 167, 190, 201, 281, 400, and 405 each coordinate substrate. Catalysis depends on T201, which acts as the Nucleophile.

Belongs to the ArgJ family. As to quaternary structure, heterotetramer of two alpha and two beta chains.

The protein localises to the cytoplasm. The enzyme catalyses N(2)-acetyl-L-ornithine + L-glutamate = N-acetyl-L-glutamate + L-ornithine. It carries out the reaction L-glutamate + acetyl-CoA = N-acetyl-L-glutamate + CoA + H(+). Its pathway is amino-acid biosynthesis; L-arginine biosynthesis; L-ornithine and N-acetyl-L-glutamate from L-glutamate and N(2)-acetyl-L-ornithine (cyclic): step 1/1. It participates in amino-acid biosynthesis; L-arginine biosynthesis; N(2)-acetyl-L-ornithine from L-glutamate: step 1/4. Functionally, catalyzes two activities which are involved in the cyclic version of arginine biosynthesis: the synthesis of N-acetylglutamate from glutamate and acetyl-CoA as the acetyl donor, and of ornithine by transacetylation between N(2)-acetylornithine and glutamate. In Nocardia farcinica (strain IFM 10152), this protein is Arginine biosynthesis bifunctional protein ArgJ.